The primary structure comprises 146 residues: 3-hydroxyacyl-[acyl-carrier-protein] dehydratase FabZ (146 aa).

H49 is a catalytic residue.

Belongs to the thioester dehydratase family. FabZ subfamily.

It is found in the cytoplasm. The catalysed reaction is a (3R)-hydroxyacyl-[ACP] = a (2E)-enoyl-[ACP] + H2O. Functionally, involved in unsaturated fatty acids biosynthesis. Catalyzes the dehydration of short chain beta-hydroxyacyl-ACPs and long chain saturated and unsaturated beta-hydroxyacyl-ACPs. The protein is 3-hydroxyacyl-[acyl-carrier-protein] dehydratase FabZ of Wolbachia sp. subsp. Brugia malayi (strain TRS).